The following is an 86-amino-acid chain: Dolichyl-diphosphooligosaccharide--protein glycosyltransferase subunit OST5 (86 aa).

The Lumenal portion of the chain corresponds to 2-27 (TYEQLYKEFHSSKSFQPFIHLDTQPK). The helical transmembrane segment at 28-48 (FAICGLIVTLAVLSSALFAVG) threads the bilayer. At 49-56 (SKSSYIKK) the chain is on the cytoplasmic side. A helical transmembrane segment spans residues 57 to 77 (LFFYTILSVIGSLFAGLTTVF). The Lumenal segment spans residues 78–86 (ASNSFGVYV).

Belongs to the OST5 family. In terms of assembly, component of the oligosaccharyltransferase (OST) complex, which appears to exist in two assemblies comprising OST1, OST2, OST4, OST5, STT3, SWP1, WPB1, and either OST3 or OST6. OST assembly occurs through the formation of 3 subcomplexes. Subcomplex 1 contains OST1 and OST5, subcomplex 2 contains STT3, OST3, and OST4, and subcomplex 3 contains OST2, WBP1, and SWP1.

Its subcellular location is the endoplasmic reticulum membrane. It functions in the pathway protein modification; protein glycosylation. Subunit of the oligosaccharyl transferase (OST) complex that catalyzes the initial transfer of a defined glycan (Glc(3)Man(9)GlcNAc(2) in eukaryotes) from the lipid carrier dolichol-pyrophosphate to an asparagine residue within an Asn-X-Ser/Thr consensus motif in nascent polypeptide chains, the first step in protein N-glycosylation. N-glycosylation occurs cotranslationally and the complex associates with the Sec61 complex at the channel-forming translocon complex that mediates protein translocation across the endoplasmic reticulum (ER). All subunits are required for a maximal enzyme activity. This Saccharomyces cerevisiae (strain ATCC 204508 / S288c) (Baker's yeast) protein is Dolichyl-diphosphooligosaccharide--protein glycosyltransferase subunit OST5 (OST5).